We begin with the raw amino-acid sequence, 156 residues long: ATP synthase subunit b (156 aa).

Residues 7–29 (LIAQAISFAILIWFTTKFVWPYL) traverse the membrane as a helical segment.

It belongs to the ATPase B chain family. F-type ATPases have 2 components, F(1) - the catalytic core - and F(0) - the membrane proton channel. F(1) has five subunits: alpha(3), beta(3), gamma(1), delta(1), epsilon(1). F(0) has three main subunits: a(1), b(2) and c(10-14). The alpha and beta chains form an alternating ring which encloses part of the gamma chain. F(1) is attached to F(0) by a central stalk formed by the gamma and epsilon chains, while a peripheral stalk is formed by the delta and b chains.

The protein resides in the cell inner membrane. F(1)F(0) ATP synthase produces ATP from ADP in the presence of a proton or sodium gradient. F-type ATPases consist of two structural domains, F(1) containing the extramembraneous catalytic core and F(0) containing the membrane proton channel, linked together by a central stalk and a peripheral stalk. During catalysis, ATP synthesis in the catalytic domain of F(1) is coupled via a rotary mechanism of the central stalk subunits to proton translocation. In terms of biological role, component of the F(0) channel, it forms part of the peripheral stalk, linking F(1) to F(0). The chain is ATP synthase subunit b from Methylobacillus flagellatus (strain ATCC 51484 / DSM 6875 / VKM B-1610 / KT).